The sequence spans 302 residues: GTPase Era (302 aa).

The Era-type G domain maps to Lys4 to Glu171. Positions Gly12–Ser19 are G1. Gly12 to Ser19 serves as a coordination point for GTP. A G2 region spans residues Gln38–Asn42. Positions Asp59–Gly62 are G3. GTP-binding positions include Asp59 to Ile63 and Asn121 to Asp124. The interval Asn121–Asp124 is G4. Positions Ile150–Ala152 are G5. The 79-residue stretch at Leu202–Lys280 folds into the KH type-2 domain.

The protein belongs to the TRAFAC class TrmE-Era-EngA-EngB-Septin-like GTPase superfamily. Era GTPase family. Monomer.

It localises to the cytoplasm. Its subcellular location is the cell membrane. Functionally, an essential GTPase that binds both GDP and GTP, with rapid nucleotide exchange. Plays a role in 16S rRNA processing and 30S ribosomal subunit biogenesis and possibly also in cell cycle regulation and energy metabolism. The polypeptide is GTPase Era (Thermoanaerobacter pseudethanolicus (strain ATCC 33223 / 39E) (Clostridium thermohydrosulfuricum)).